The sequence spans 178 residues: Interleukin-10 (178 aa).

The N-terminal stretch at 1-18 (MHSSALLCCLVLLTGVRA) is a signal peptide. Disulfide bonds link Cys-30–Cys-126 and Cys-80–Cys-132. An N-linked (GlcNAc...) asparagine glycan is attached at Asn-134.

The protein belongs to the IL-10 family. As to quaternary structure, homodimer. Interacts with IL10RA and IL10RB. Produced by a variety of cell lines, including T-cells, macrophages, mast cells and other cell types.

Its subcellular location is the secreted. Its function is as follows. Major immune regulatory cytokine that acts on many cells of the immune system where it has profound anti-inflammatory functions, limiting excessive tissue disruption caused by inflammation. Mechanistically, IL10 binds to its heterotetrameric receptor comprising IL10RA and IL10RB leading to JAK1 and STAT2-mediated phosphorylation of STAT3. In turn, STAT3 translocates to the nucleus where it drives expression of anti-inflammatory mediators. Targets antigen-presenting cells (APCs) such as macrophages and monocytes and inhibits their release of pro-inflammatory cytokines including granulocyte-macrophage colony-stimulating factor /GM-CSF, granulocyte colony-stimulating factor/G-CSF, IL-1 alpha, IL-1 beta, IL-6, IL-8 and TNF-alpha. Also interferes with antigen presentation by reducing the expression of MHC-class II and co-stimulatory molecules, thereby inhibiting their ability to induce T cell activation. In addition, controls the inflammatory response of macrophages by reprogramming essential metabolic pathways including mTOR signaling. In Homo sapiens (Human), this protein is Interleukin-10 (IL10).